A 253-amino-acid polypeptide reads, in one-letter code: 2-succinyl-6-hydroxy-2,4-cyclohexadiene-1-carboxylate synthase (253 aa).

Positions 11-147 constitute an AB hydrolase-1 domain; the sequence is PWLVCLHGLF…PEALQDWYQQ (137 aa).

Belongs to the AB hydrolase superfamily. MenH family. As to quaternary structure, monomer.

The catalysed reaction is 5-enolpyruvoyl-6-hydroxy-2-succinyl-cyclohex-3-ene-1-carboxylate = (1R,6R)-6-hydroxy-2-succinyl-cyclohexa-2,4-diene-1-carboxylate + pyruvate. Its pathway is quinol/quinone metabolism; 1,4-dihydroxy-2-naphthoate biosynthesis; 1,4-dihydroxy-2-naphthoate from chorismate: step 3/7. The protein operates within quinol/quinone metabolism; menaquinone biosynthesis. Its function is as follows. Catalyzes a proton abstraction reaction that results in 2,5-elimination of pyruvate from 2-succinyl-5-enolpyruvyl-6-hydroxy-3-cyclohexene-1-carboxylate (SEPHCHC) and the formation of 2-succinyl-6-hydroxy-2,4-cyclohexadiene-1-carboxylate (SHCHC). This chain is 2-succinyl-6-hydroxy-2,4-cyclohexadiene-1-carboxylate synthase, found in Pectobacterium atrosepticum (strain SCRI 1043 / ATCC BAA-672) (Erwinia carotovora subsp. atroseptica).